The chain runs to 473 residues: RuvB-like helicase 2 (473 aa).

76–83 (GPPSTGKT) lines the ATP pocket.

This sequence belongs to the RuvB family. In terms of assembly, may form heterododecamers with RVB1. Component of the SWR1 chromatin remodeling complex, the INO80 chromatin remodeling complex, and of the R2TP complex.

It is found in the nucleus. The enzyme catalyses ATP + H2O = ADP + phosphate + H(+). Functionally, DNA helicase which participates in several chromatin remodeling complexes, including the SWR1 and the INO80 complexes. The SWR1 complex mediates the ATP-dependent exchange of histone H2A for the H2A variant HZT1 leading to transcriptional regulation of selected genes by chromatin remodeling. The INO80 complex remodels chromatin by shifting nucleosomes and is involved in DNA repair. Also involved in pre-rRNA processing. The polypeptide is RuvB-like helicase 2 (RVB2) (Gibberella zeae (strain ATCC MYA-4620 / CBS 123657 / FGSC 9075 / NRRL 31084 / PH-1) (Wheat head blight fungus)).